The primary structure comprises 441 residues: Trigger factor (441 aa).

The region spanning 161-246 (GDKVTIDFLG…VHEVLGEKLP (86 aa)) is the PPIase FKBP-type domain.

This sequence belongs to the FKBP-type PPIase family. Tig subfamily.

Its subcellular location is the cytoplasm. The catalysed reaction is [protein]-peptidylproline (omega=180) = [protein]-peptidylproline (omega=0). Its function is as follows. Involved in protein export. Acts as a chaperone by maintaining the newly synthesized protein in an open conformation. Functions as a peptidyl-prolyl cis-trans isomerase. This Teredinibacter turnerae (strain ATCC 39867 / T7901) protein is Trigger factor.